The chain runs to 268 residues: Tryptophan synthase alpha chain (268 aa).

Active-site proton acceptor residues include Glu-49 and Asp-60.

The protein belongs to the TrpA family. In terms of assembly, tetramer of two alpha and two beta chains.

It carries out the reaction (1S,2R)-1-C-(indol-3-yl)glycerol 3-phosphate + L-serine = D-glyceraldehyde 3-phosphate + L-tryptophan + H2O. It functions in the pathway amino-acid biosynthesis; L-tryptophan biosynthesis; L-tryptophan from chorismate: step 5/5. Functionally, the alpha subunit is responsible for the aldol cleavage of indoleglycerol phosphate to indole and glyceraldehyde 3-phosphate. In Pectobacterium atrosepticum (strain SCRI 1043 / ATCC BAA-672) (Erwinia carotovora subsp. atroseptica), this protein is Tryptophan synthase alpha chain.